A 404-amino-acid chain; its full sequence is Cysteine desulfurase IscS (404 aa).

Residues 75-76 (AT), Asn-155, Gln-183, and 203-205 (SGH) each bind pyridoxal 5'-phosphate. Lys-206 carries the N6-(pyridoxal phosphate)lysine modification. Thr-243 contributes to the pyridoxal 5'-phosphate binding site. Catalysis depends on Cys-328, which acts as the Cysteine persulfide intermediate. Cys-328 contributes to the [2Fe-2S] cluster binding site.

Belongs to the class-V pyridoxal-phosphate-dependent aminotransferase family. NifS/IscS subfamily. Homodimer. Forms a heterotetramer with IscU, interacts with other sulfur acceptors. Requires pyridoxal 5'-phosphate as cofactor.

The protein localises to the cytoplasm. It catalyses the reaction (sulfur carrier)-H + L-cysteine = (sulfur carrier)-SH + L-alanine. The protein operates within cofactor biosynthesis; iron-sulfur cluster biosynthesis. Master enzyme that delivers sulfur to a number of partners involved in Fe-S cluster assembly, tRNA modification or cofactor biosynthesis. Catalyzes the removal of elemental sulfur atoms from cysteine to produce alanine. Functions as a sulfur delivery protein for Fe-S cluster synthesis onto IscU, an Fe-S scaffold assembly protein, as well as other S acceptor proteins. In Mannheimia succiniciproducens (strain KCTC 0769BP / MBEL55E), this protein is Cysteine desulfurase IscS.